Here is a 566-residue protein sequence, read N- to C-terminus: FAD-dependent monooxygenase asqG (566 aa).

The first 19 residues, M1–A19, serve as a signal peptide directing secretion. Residues E33, V47, R113, D313, and A326 each contribute to the FAD site. Helical transmembrane passes span A448–W468 and G482–V502.

It belongs to the paxM FAD-dependent monooxygenase family. The cofactor is FAD.

It is found in the membrane. It carries out the reaction [(1'E)-3'-hydroxy-3',7'-dimethylocta-1',6'-dien-1'-yl]-quinolinone B + NADPH + O2 + H(+) = [(1'E)-5'-(3',3'-dimethyloxiran-2'-yl)-3'-hydroxy-3'-methylpent-1'-en-1'-yl]-quinolinone B + NADP(+) + H2O. The protein operates within secondary metabolite biosynthesis. It functions in the pathway alkaloid biosynthesis. Its pathway is mycotoxin biosynthesis. Functionally, FAD-dependent monooxygenase; part of the gene cluster that mediates the biosynthesis of the aspoquinolone mycotoxins. Within the pathway, the FAD-dependent monooxygenase asqG catalyzes the epoxidation of the terminal C7'-C8' olefin to produce the intermediate [(1'E)-5'-(3',3'-dimethyloxiran-2'-yl)-3'-hydroxy-3'-methylpent-1'-en-1'-yl]-quinolinone B. The first step of the pathway is catalyzed by the nonribosomal peptide synthetase asqK that condenses anthranilic acid and O-methyl-L-tyrosine to produce 4'-methoxycyclopeptin. 4'-methoxycyclopeptin is then converted to 4'-methoxydehydrocyclopeptin by the ketoglutarate-dependent dioxygenase asqJ. AsqJ also converts its first product 4'-methoxydehydrocyclopeptin to 4'-methoxycyclopenin. The following conversion of 4'-methoxycyclopenin into 4'-methoxyviridicatin is catalyzed by the cyclopenase asqI. 4'-methoxyviridicatin is the precursor of quinolone natural products, and is further converted to quinolinone B. The prenyltransferase asqH1 then catalyzes the canonical Friedel-Crafts alkylation of quinolinone B with dimethylallyl cation to yield dimethylallyl quinolone, which is subjected to FAD-dependent dehydrogenation by the FAD-linked oxidoreductase asqF to yield conjugated aryl diene. The delta(3') double bond then serves as the site of the second alkylation with DMAPP catalyzed by the prenyltransferase asqH2 to yield a carbenium ion intermediate, which can be attacked by H(2)O to yield a styrenyl quinolone containing a C3'-hydroxyprenyl chain. The FAD-dependent monooxygenase asqG performs epoxidation of the terminal C7'-C8' olefin. Finally, after dehydratation of the epoxide at C3 by asqC, the quinolone epoxide rearrangement protein asqO catalyzes an enzymatic 3-exo-tet cyclization to yield the cyclopropyl-THF ring system in aspoquinolone. The chain is FAD-dependent monooxygenase asqG from Emericella nidulans (strain FGSC A4 / ATCC 38163 / CBS 112.46 / NRRL 194 / M139) (Aspergillus nidulans).